The following is a 247-amino-acid chain: uncharacterized protein (247 aa).

This is an uncharacterized protein from Acanthamoeba polyphaga (Amoeba).